The chain runs to 147 residues: Putative pre-16S rRNA nuclease (147 aa).

The protein belongs to the YqgF nuclease family.

It localises to the cytoplasm. Could be a nuclease involved in processing of the 5'-end of pre-16S rRNA. This chain is Putative pre-16S rRNA nuclease, found in Latilactobacillus sakei subsp. sakei (strain 23K) (Lactobacillus sakei subsp. sakei).